Reading from the N-terminus, the 86-residue chain is Late effector protein 1 (86 aa).

An N-terminal signal peptide occupies residues 1-24 (MRSHQMAAFFAVSLMMMVVLGALS).

Belongs to the lep1 family. Interacts at the cell wall with secreted rep1 repellent peptides.

It localises to the secreted. Its subcellular location is the cell wall. Its function is as follows. Core effector contributing to spore formation and tumor formation at the host plant. Modulates surface hydrophobicity promoting cell-cell or cell-surface contacts. Lep1 and rep1 interact in aerial hyphae to form a strong hydrophobic layer. Plays a crucial role in hyphal aggregation that might be a prerequisite for strong proliferation of diploid cells and for induction of the morphological changes associated with spore formation. The polypeptide is Late effector protein 1 (Mycosarcoma maydis (Corn smut fungus)).